The following is a 354-amino-acid chain: Biotin synthase (354 aa).

The Radical SAM core domain maps to 41-265 (NEVQISRLLS…LMPHSRVRLS (225 aa)). The [4Fe-4S] cluster site is built by cysteine 56, cysteine 60, and cysteine 63. [2Fe-2S] cluster is bound by residues cysteine 100, cysteine 131, cysteine 191, and arginine 263.

It belongs to the radical SAM superfamily. Biotin synthase family. Homodimer. [4Fe-4S] cluster serves as cofactor. [2Fe-2S] cluster is required as a cofactor.

The catalysed reaction is (4R,5S)-dethiobiotin + (sulfur carrier)-SH + 2 reduced [2Fe-2S]-[ferredoxin] + 2 S-adenosyl-L-methionine = (sulfur carrier)-H + biotin + 2 5'-deoxyadenosine + 2 L-methionine + 2 oxidized [2Fe-2S]-[ferredoxin]. Its pathway is cofactor biosynthesis; biotin biosynthesis; biotin from 7,8-diaminononanoate: step 2/2. Its function is as follows. Catalyzes the conversion of dethiobiotin (DTB) to biotin by the insertion of a sulfur atom into dethiobiotin via a radical-based mechanism. This is Biotin synthase from Shewanella woodyi (strain ATCC 51908 / MS32).